Here is a 136-residue protein sequence, read N- to C-terminus: Small ribosomal subunit protein uS19 (136 aa).

Residues 114 to 136 (RSRVSHGSAGVGATRSSKFVPLK) are disordered.

It belongs to the universal ribosomal protein uS19 family.

In terms of biological role, protein S19 forms a complex with S13 that binds strongly to the 16S ribosomal RNA. This is Small ribosomal subunit protein uS19 from Methanosarcina acetivorans (strain ATCC 35395 / DSM 2834 / JCM 12185 / C2A).